Reading from the N-terminus, the 599-residue chain is Elongation factor 4 (599 aa).

Positions 5–187 (SHIRNFSIIA…RLVHTIPAPV (183 aa)) constitute a tr-type G domain. Residues 17 to 22 (DHGKST) and 134 to 137 (NKMD) each bind GTP.

The protein belongs to the TRAFAC class translation factor GTPase superfamily. Classic translation factor GTPase family. LepA subfamily.

It localises to the cell inner membrane. It catalyses the reaction GTP + H2O = GDP + phosphate + H(+). Functionally, required for accurate and efficient protein synthesis under certain stress conditions. May act as a fidelity factor of the translation reaction, by catalyzing a one-codon backward translocation of tRNAs on improperly translocated ribosomes. Back-translocation proceeds from a post-translocation (POST) complex to a pre-translocation (PRE) complex, thus giving elongation factor G a second chance to translocate the tRNAs correctly. Binds to ribosomes in a GTP-dependent manner. This chain is Elongation factor 4, found in Pseudomonas putida (strain W619).